The chain runs to 695 residues: Zinc finger SWIM domain-containing protein 3 (695 aa).

Residues 434–490 form a disordered region; that stretch reads NAPKLRRTRLPSTPPRPKKPFRICGGGDTRLPVEEVEETKADSAQSQLPQPQDQSSK. The segment covering 475 to 489 has biased composition (low complexity); it reads DSAQSQLPQPQDQSS. Residues 530-571 form an SWIM-type zinc finger; sequence VAVQLLENSHQVSKDGCSCSCSFQQCYHLPCRHILALLHTSQ.

The sequence is that of Zinc finger SWIM domain-containing protein 3 (Zswim3) from Mus musculus (Mouse).